A 434-amino-acid polypeptide reads, in one-letter code: F-box/FBD/LRR-repeat protein At3g26920 (434 aa).

The F-box domain occupies 16 to 65 (EDRISQLPEALLLQILSLLPTKEVVAVSVLAKRWRFLWKMVPSLEFFYYF). LRR repeat units follow at residues 69-95 (LERF…HLNM), 100-125 (DPRI…VLKV), 145-172 (TLEL…NLHE), 173-198 (VEFV…VIHQ), 219-244 (VIVE…KIEG), 265-290 (IIDV…SLKV), and 315-341 (TYKP…KIFD). The 51-residue stretch at 353–403 (KWNEPKNVPECLLLHLETFVWTCYEGKLENEIELAKYILRNARRLKKATFS) folds into the FBD domain.

The protein is F-box/FBD/LRR-repeat protein At3g26920 of Arabidopsis thaliana (Mouse-ear cress).